The following is an 81-amino-acid chain: uncharacterized protein (81 aa).

The first 22 residues, methionine 1 to alanine 22, serve as a signal peptide directing secretion. Residues histidine 29–lysine 81 are disordered. Low complexity predominate over residues serine 30–glycine 58. Residues serine 59–serine 75 are compositionally biased toward gly residues.

The protein resides in the secreted. This is an uncharacterized protein from Dictyostelium discoideum (Social amoeba).